Reading from the N-terminus, the 117-residue chain is Membrane-anchored ubiquitin-fold protein 1 (117 aa).

Residues Leu-8–Tyr-74 enclose the Ubiquitin-like domain. A lipid anchor (S-palmitoyl cysteine) is attached at Cys-112. Cysteine methyl ester is present on Cys-114. A lipid anchor (S-farnesyl cysteine) is attached at Cys-114. A propeptide spans Ser-115–Met-117 (removed in mature form).

Its subcellular location is the cell membrane. Its function is as follows. May serve as docking site to facilitate the association of other proteins to the plasma membrane. This is Membrane-anchored ubiquitin-fold protein 1 (MUB1) from Arabidopsis thaliana (Mouse-ear cress).